The primary structure comprises 210 residues: Large ribosomal subunit protein uL3 (210 aa).

Residues 126 to 152 are disordered; the sequence is HGFRGGPKTHGQSDRHRAPGSIGAGTT.

The protein belongs to the universal ribosomal protein uL3 family. In terms of assembly, part of the 50S ribosomal subunit. Forms a cluster with proteins L14 and L19.

In terms of biological role, one of the primary rRNA binding proteins, it binds directly near the 3'-end of the 23S rRNA, where it nucleates assembly of the 50S subunit. This is Large ribosomal subunit protein uL3 from Chloroflexus aurantiacus (strain ATCC 29366 / DSM 635 / J-10-fl).